Consider the following 375-residue polypeptide: Tubulinyl-Tyr carboxypeptidase 1 (375 aa).

Positions 1–33 are enriched in low complexity; the sequence is MPGGKKVVPSGSSSASPNAAATTTAAAAAAAAA. The disordered stretch occupies residues 1-69; the sequence is MPGGKKVVPS…EEDLRDGGVP (69 aa). Acidic residues predominate over residues 53 to 63; it reads EEPEEEGEEDL. Residues Cys-179, His-214, and Ser-231 contribute to the active site. The interval 309 to 375 is disordered; that stretch reads RDMRLKIGKG…PDLSGYQIRV (67 aa). The tract at residues 329 to 375 is involved in heparin-binding and antiangiogenic activity; the sequence is KKDVSSPQRAQSSPHRRNSRSERRPSGEKKPAEPKAMPDLSGYQIRV. The span at 347-361 shows a compositional bias: basic and acidic residues; it reads SRSERRPSGEKKPAE.

It belongs to the transglutaminase-like superfamily. Vasohibin family. As to quaternary structure, interacts with SVBP; interaction enhances VASH1 tyrosine carboxypeptidase activity. Post-translationally, ubiquitinated in vitro. Expressed at low level in proliferating endothelial cells at the sprouting front but highly expressed in nonproliferating endothelial cells in the termination zone.

It localises to the cytoplasm. The protein resides in the secreted. The enzyme catalyses C-terminal L-alpha-aminoacyl-L-glutamyl-L-glutamyl-L-tyrosyl-[tubulin] + H2O = C-terminal L-alpha-aminoacyl-L-glutamyl-L-glutamyl-[tubulin] + L-tyrosine. Functionally, tyrosine carboxypeptidase that removes the C-terminal tyrosine residue of alpha-tubulin, thereby regulating microtubule dynamics and function. Acts as an angiogenesis inhibitor: inhibits migration, proliferation and network formation by endothelial cells as well as angiogenesis. This inhibitory effect is selective to endothelial cells as it does not affect the migration of smooth muscle cells or fibroblasts. The sequence is that of Tubulinyl-Tyr carboxypeptidase 1 from Mus musculus (Mouse).